The primary structure comprises 381 residues: L-lactate dehydrogenase (381 aa).

Positions 1-380 (MIISSASDYR…KPEALVDLSK (380 aa)) constitute an FMN hydroxy acid dehydrogenase domain. A substrate-binding site is contributed by tyrosine 24. The FMN site is built by serine 106 and glutamine 127. Substrate is bound at residue tyrosine 129. Threonine 155 lines the FMN pocket. Arginine 164 contributes to the substrate binding site. Lysine 251 serves as a coordination point for FMN. Histidine 275 (proton acceptor) is an active-site residue. Arginine 278 is a binding site for substrate. 306 to 330 (DSGIRNGLDIVRMLALGADATMLGR) is a binding site for FMN.

The protein belongs to the FMN-dependent alpha-hydroxy acid dehydrogenase family. FMN serves as cofactor.

Its subcellular location is the cell inner membrane. It catalyses the reaction (S)-lactate + A = pyruvate + AH2. Its function is as follows. Catalyzes the conversion of L-lactate to pyruvate. Is coupled to the respiratory chain. The sequence is that of L-lactate dehydrogenase from Haemophilus influenzae (strain PittEE).